Here is a 318-residue protein sequence, read N- to C-terminus: Isoflavone reductase (318 aa).

NADP(+) is bound by residues 11-17, arginine 36, and lysine 44; that span reads GATGAIG. The Proton acceptor role is filled by lysine 144. Arginine 148 is a binding site for NADP(+).

This sequence belongs to the NmrA-type oxidoreductase family. Isoflavone reductase subfamily.

The catalysed reaction is (3R)-vestitone + NADP(+) = 2'-hydroxyformononetin + NADPH + 2 H(+). It participates in phytoalexin biosynthesis; pterocarpan phytoalexin biosynthesis. Reduces achiral isoflavones to chiral isoflavanones during the biosynthesis of chiral pterocarpan phytoalexins. The reduction product (sophrol) is a third isomer, which represents the penultimate intermediate in the synthesis of the phytoalexin (+)-pisatin, the major phytoalexin in pea. This chain is Isoflavone reductase (IFR), found in Pisum sativum (Garden pea).